We begin with the raw amino-acid sequence, 519 residues long: uncharacterized protein (519 aa).

A run of 11 helical transmembrane segments spans residues 52 to 72 (IYFLILLYLIQGVPMGLVRGS), 86 to 106 (LATYSLAAYPYSLKVLWSPIV), 119 to 139 (TWVVPCMLLISSTLLLFSYNV), 156 to 176 (WSFLLVFVCATQDIAVDGWSL), 199 to 219 (FFLSFTILLVFTSPEFANTFI), 231 to 251 (LSGYIKFWAYFTFIASVLVCF), 313 to 333 (MLSLIILINFPLGLALGVYTG), 343 to 363 (IWLKGYWGRVVSILLNTILVY), 374 to 394 (VFFPIFLCYTLNASFSTIQFV), 408 to 430 (IGGTYMTILNTLSNLGGSWPQYV), and 477 to 497 (TSIVGIFLAISICVSLITPVV).

It localises to the membrane. This is an uncharacterized protein from Schizosaccharomyces pombe (strain 972 / ATCC 24843) (Fission yeast).